The chain runs to 127 residues: Cold-regulated protein 1 (127 aa).

A disordered region spans residues alanine 39 to arginine 127. Basic residues predominate over residues serine 85–methionine 101. Over residues proline 102–proline 121 the composition is skewed to low complexity.

This chain is Cold-regulated protein 1, found in Hordeum vulgare (Barley).